The chain runs to 245 residues: MAPK-interacting and spindle-stabilizing protein-like (245 aa).

The tract at residues 1–245 (MSDEFSLADA…PMPGGPHSYH (245 aa)) is disordered. At Ser-2 the chain carries N-acetylserine. 3 positions are modified to phosphoserine: Ser-2, Ser-6, and Ser-15. Residues 17–26 (AKTSAVSNTK) are compositionally biased toward polar residues. A compositionally biased stretch (low complexity) spans 34-51 (WPGSNPWNNPSAPSSVPS). Pro residues-rich tracts occupy residues 74–127 (SVPP…PELP), 164–190 (PNMP…PPVP), and 198–207 (AWGPPAPYPA).

Belongs to the MISS family.

The chain is MAPK-interacting and spindle-stabilizing protein-like (MAPK1IP1L) from Homo sapiens (Human).